The sequence spans 320 residues: Aspartate carbamoyltransferase catalytic subunit (320 aa).

Residues Arg-68 and Thr-69 each coordinate carbamoyl phosphate. Residue Lys-96 coordinates L-aspartate. 3 residues coordinate carbamoyl phosphate: Arg-118, His-148, and Gln-151. Residues Arg-181 and Arg-236 each coordinate L-aspartate. Carbamoyl phosphate-binding residues include Gly-277 and Pro-278.

Belongs to the aspartate/ornithine carbamoyltransferase superfamily. ATCase family. As to quaternary structure, heterododecamer (2C3:3R2) of six catalytic PyrB chains organized as two trimers (C3), and six regulatory PyrI chains organized as three dimers (R2).

It catalyses the reaction carbamoyl phosphate + L-aspartate = N-carbamoyl-L-aspartate + phosphate + H(+). It functions in the pathway pyrimidine metabolism; UMP biosynthesis via de novo pathway; (S)-dihydroorotate from bicarbonate: step 2/3. Functionally, catalyzes the condensation of carbamoyl phosphate and aspartate to form carbamoyl aspartate and inorganic phosphate, the committed step in the de novo pyrimidine nucleotide biosynthesis pathway. In Polaromonas naphthalenivorans (strain CJ2), this protein is Aspartate carbamoyltransferase catalytic subunit.